The primary structure comprises 694 residues: PTS system fructose-specific EIIABC component (694 aa).

The region spanning 4–149 (PLLSAELFFN…NGLINLIDSF (146 aa)) is the PTS EIIA type-2 domain. His68 acts as the Tele-phosphohistidine intermediate; for EIIA activity in catalysis. At His68 the chain carries Phosphohistidine; by HPr. The PTS EIIB type-2 domain occupies 179–275 (FVAVTACPTG…PQTVYDQVVK (97 aa)). The Phosphocysteine intermediate; for EIIB activity role is filled by Cys185. Phosphocysteine; by EIIA is present on Cys185. Residues 310-687 (IYRAILSGVS…NLLVVRKKTK (378 aa)) form the PTS EIIC type-2 domain. 10 helical membrane passes run 318–338 (VSYMLPFVVFGGILIAIAFLI), 364–384 (GGLSFGLIVPILSAYIAFALV), 390–410 (LPGFIVGLISAGKFLLNIDIV), 422–442 (VSSGFFGAIFGGLLAAVLIIV), 461–481 (ILFIPLLGTLVTAALFWVINI), 502–522 (LAPLLGLVIGLMMCFDLGGPV), 542–562 (VAMASAILSGMVPPLGIAIAA), 576–596 (AAYACYVMGLSFISEGAIPFV), 602–622 (IMLAANLIGGAVCGVLTGAFA), and 655–675 (GVGLALLALIVSSFISAGIII).

Its subcellular location is the cell membrane. The catalysed reaction is D-fructose(out) + N(pros)-phospho-L-histidyl-[protein] = D-fructose 1-phosphate(in) + L-histidyl-[protein]. The phosphoenolpyruvate-dependent sugar phosphotransferase system (sugar PTS), a major carbohydrate active transport system, catalyzes the phosphorylation of incoming sugar substrates concomitantly with their translocation across the cell membrane. This system is involved in fructose transport. The sequence is that of PTS system fructose-specific EIIABC component from Mycoplasma pneumoniae (strain ATCC 29342 / M129 / Subtype 1) (Mycoplasmoides pneumoniae).